We begin with the raw amino-acid sequence, 192 residues long: Phosphoheptose isomerase (192 aa).

The region spanning valine 34–asparagine 192 is the SIS domain. Residue asparagine 49–glycine 51 coordinates substrate. 2 residues coordinate Zn(2+): histidine 58 and glutamate 62. Substrate contacts are provided by residues glutamate 62, asparagine 91–aspartate 92, serine 117–serine 119, serine 122, and glutamine 169. 2 residues coordinate Zn(2+): glutamine 169 and histidine 177.

It belongs to the SIS family. GmhA subfamily. Homotetramer. The cofactor is Zn(2+).

It localises to the cytoplasm. It catalyses the reaction 2 D-sedoheptulose 7-phosphate = D-glycero-alpha-D-manno-heptose 7-phosphate + D-glycero-beta-D-manno-heptose 7-phosphate. It functions in the pathway carbohydrate biosynthesis; D-glycero-D-manno-heptose 7-phosphate biosynthesis; D-glycero-alpha-D-manno-heptose 7-phosphate and D-glycero-beta-D-manno-heptose 7-phosphate from sedoheptulose 7-phosphate: step 1/1. Functionally, catalyzes the isomerization of sedoheptulose 7-phosphate in D-glycero-D-manno-heptose 7-phosphate. This Geobacter sp. (strain M21) protein is Phosphoheptose isomerase.